Here is a 644-residue protein sequence, read N- to C-terminus: ATP-dependent zinc metalloprotease FtsH (644 aa).

Over 1–11 (MNDNKNNTVRN) the chain is Stromal. Residues 12–32 (LLIGIALLSGISLTAKKFDLI) form a helical membrane-spanning segment. Topologically, residues 33-128 (GVQGSESGKN…FDAHPAEQKN (96 aa)) are lumenal. Residues 129-149 (IFVNILSNILLPIIFITGLVY) traverse the membrane as a helical segment. At 150-644 (LFQNSENFGG…KNIPYVSKFN (495 aa)) the chain is on the stromal side. Position 226 to 233 (226 to 233 (GPPGTGKT)) interacts with ATP. Residue histidine 447 participates in Zn(2+) binding. Glutamate 448 is an active-site residue. Positions 451 and 525 each coordinate Zn(2+).

It in the central section; belongs to the AAA ATPase family. The protein in the C-terminal section; belongs to the peptidase M41 family. Homohexamer. It depends on Zn(2+) as a cofactor.

The protein localises to the plastid. It is found in the chloroplast thylakoid membrane. Acts as a processive, ATP-dependent zinc metallopeptidase. This chain is ATP-dependent zinc metalloprotease FtsH, found in Trieres chinensis (Marine centric diatom).